Consider the following 353-residue polypeptide: UPF0283 membrane protein YcjF (353 aa).

3 consecutive transmembrane segments (helical) span residues 70-90 (MVMG…VQWT), 100-120 (VALG…GSVV), and 213-233 (ESTL…FIAW).

Belongs to the UPF0283 family.

The protein localises to the cell inner membrane. The sequence is that of UPF0283 membrane protein YcjF from Escherichia coli O127:H6 (strain E2348/69 / EPEC).